Here is a 294-residue protein sequence, read N- to C-terminus: MKGSSKAIKRVLEHLQSTGRVLGTVESKVPAGISEEAALSGGHQQLQIKKPLILQFRSYNPYLVKEDIVSILPENQYKKRGQFTNGLDFQLIKVRDPKYFQFKDQYYLLFNDHNSLVEYADLTRLSRINKVRVRMTPLMQPLPNLMTKFQRYSQNLHNAFQSSEKYFEGLTEKIDAKNMIDVTQLWRVLDSVREMESKSVLVWNFPTELQSSNILNYFWFYNIRSSFKMYWDDEMKRNLRFISFENSNDAYRFKRNYHGLLAKELLNPPRKEKDTLETNSVIDDSKLLIEHLNE.

It localises to the mitochondrion inner membrane. In terms of biological role, activator of specific mitochondrial mRNAs. PET54 is involved in the excision of intron aI5-beta from pre-mRNA for cytochrome c oxidase I (COX1) and plays a role in promoting the translation of COX3. The chain is Protein PET54 (PET54) from Saccharomyces bayanus (Yeast).